Here is a 612-residue protein sequence, read N- to C-terminus: Dihydroxy-acid dehydratase (612 aa).

D81 provides a ligand contact to Mg(2+). Residue C122 participates in [2Fe-2S] cluster binding. The Mg(2+) site is built by D123 and K124. K124 is modified (N6-carboxylysine). C195 contacts [2Fe-2S] cluster. E491 contributes to the Mg(2+) binding site. S517 (proton acceptor) is an active-site residue.

This sequence belongs to the IlvD/Edd family. In terms of assembly, homodimer. Requires [2Fe-2S] cluster as cofactor. The cofactor is Mg(2+).

The enzyme catalyses (2R)-2,3-dihydroxy-3-methylbutanoate = 3-methyl-2-oxobutanoate + H2O. The catalysed reaction is (2R,3R)-2,3-dihydroxy-3-methylpentanoate = (S)-3-methyl-2-oxopentanoate + H2O. It functions in the pathway amino-acid biosynthesis; L-isoleucine biosynthesis; L-isoleucine from 2-oxobutanoate: step 3/4. It participates in amino-acid biosynthesis; L-valine biosynthesis; L-valine from pyruvate: step 3/4. Functions in the biosynthesis of branched-chain amino acids. Catalyzes the dehydration of (2R,3R)-2,3-dihydroxy-3-methylpentanoate (2,3-dihydroxy-3-methylvalerate) into 2-oxo-3-methylpentanoate (2-oxo-3-methylvalerate) and of (2R)-2,3-dihydroxy-3-methylbutanoate (2,3-dihydroxyisovalerate) into 2-oxo-3-methylbutanoate (2-oxoisovalerate), the penultimate precursor to L-isoleucine and L-valine, respectively. This is Dihydroxy-acid dehydratase from Bartonella tribocorum (strain CIP 105476 / IBS 506).